The following is a 49-amino-acid chain: Small ribosomal subunit protein uS19c (49 aa).

Belongs to the universal ribosomal protein uS19 family.

It is found in the plastid. It localises to the chloroplast. Protein S19 forms a complex with S13 that binds strongly to the 16S ribosomal RNA. The protein is Small ribosomal subunit protein uS19c (rps19) of Sinapis alba (White mustard).